The primary structure comprises 91 residues: uncharacterized protein (91 aa).

The chain crosses the membrane as a helical span at residues Phe-50–Leu-70.

It is found in the cell membrane. This is an uncharacterized protein from Bacillus subtilis (strain 168).